A 634-amino-acid chain; its full sequence is MVRLVLPNPGLEERIPSLDELEVIEKEEAGSRPKWDNKAQYMLTCVGFCVGLGNVWRFPYLCQSHGGGAFMIPFLILLVFEGIPLLYLEFAIGQRLRKGSMGVWSSIHPALKGIGIASMFVSFMVGLYYNTIIAWVMWYFFNSFQEPLPWSECPLNQNQTGYVEECAKSSSVDYFWYRETLNISTSISDSGSIQWWILLCLTCAWSVLYVCIIRGIETTGKAVYITSTLPYVVLTIFLIRGLTLKGATNGIVFLFTPNITELSNPNTWLDAGAQVFYSFSLAFGGLISFSSYNSVHNNCEMDSVIVSVINGFTSVYAATVVYSIIGFRATERFDDCVNTNILTLINGFDLPEGNVTSENFEAYQQWCNATNPQAYAQLKFQTCDINSFLSEGVEGTGLAFIVFTEAITKMPVSPLWSVLFFIMLFCLGLSSMFGNMEGVVVPLQDLNITPKKWPKELLTGLICLGTYLIAFIFTLNSGQYWLSLLDSFAGSIPLLIIAFCEMFAVVYVYGVDRFNKDIEFMIGHKPNIFWQVTWRVVSPLIMLVIFLFFFVIEVNKTLMYSIWDPNYEEFPKSQKIPYPNWVYAVVVTVAGVPCLSIPCFAIYKFIRNCCQKSDDHHGLVNTLSTASVNGDLKN.

Residues 1-41 are Cytoplasmic-facing; it reads MVRLVLPNPGLEERIPSLDELEVIEKEEAGSRPKWDNKAQY. Ser17 carries the post-translational modification Phosphoserine. Residues 42–62 traverse the membrane as a helical segment; that stretch reads MLTCVGFCVGLGNVWRFPYLC. Residues 63 to 67 lie on the Extracellular side of the membrane; it reads QSHGG. The chain crosses the membrane as a helical span at residues 68–88; the sequence is GAFMIPFLILLVFEGIPLLYL. Residues 89 to 119 are Cytoplasmic-facing; it reads EFAIGQRLRKGSMGVWSSIHPALKGIGIASM. Residues 120 to 140 traverse the membrane as a helical segment; that stretch reads FVSFMVGLYYNTIIAWVMWYF. Over 141–192 the chain is Extracellular; sequence FNSFQEPLPWSECPLNQNQTGYVEECAKSSSVDYFWYRETLNISTSISDSGS. Residues Asn158 and Asn182 are each glycosylated (N-linked (GlcNAc...) asparagine). Residues 193 to 213 traverse the membrane as a helical segment; it reads IQWWILLCLTCAWSVLYVCII. At 214 to 221 the chain is on the cytoplasmic side; sequence RGIETTGK. A helical membrane pass occupies residues 222–242; sequence AVYITSTLPYVVLTIFLIRGL. Residues 243–268 are Extracellular-facing; that stretch reads TLKGATNGIVFLFTPNITELSNPNTW. Residue Asn258 is glycosylated (N-linked (GlcNAc...) asparagine). A helical transmembrane segment spans residues 269 to 289; that stretch reads LDAGAQVFYSFSLAFGGLISF. Residues 290–304 lie on the Cytoplasmic side of the membrane; that stretch reads SSYNSVHNNCEMDSV. A helical membrane pass occupies residues 305–325; the sequence is IVSVINGFTSVYAATVVYSII. Residues 326 to 413 lie on the Extracellular side of the membrane; it reads GFRATERFDD…TEAITKMPVS (88 aa). Residues Asn354 and Asn368 are each glycosylated (N-linked (GlcNAc...) asparagine). The chain crosses the membrane as a helical span at residues 414–434; sequence PLWSVLFFIMLFCLGLSSMFG. The Cytoplasmic segment spans residues 435-456; that stretch reads NMEGVVVPLQDLNITPKKWPKE. A helical transmembrane segment spans residues 457-477; the sequence is LLTGLICLGTYLIAFIFTLNS. Residues 478-487 are Extracellular-facing; that stretch reads GQYWLSLLDS. Residues 488 to 508 form a helical membrane-spanning segment; that stretch reads FAGSIPLLIIAFCEMFAVVYV. At 509–531 the chain is on the cytoplasmic side; sequence YGVDRFNKDIEFMIGHKPNIFWQ. The chain crosses the membrane as a helical span at residues 532–552; sequence VTWRVVSPLIMLVIFLFFFVI. Residues 553 to 581 lie on the Extracellular side of the membrane; that stretch reads EVNKTLMYSIWDPNYEEFPKSQKIPYPNW. Residue Asn555 is glycosylated (N-linked (GlcNAc...) asparagine). Residues 582–602 form a helical membrane-spanning segment; that stretch reads VYAVVVTVAGVPCLSIPCFAI. Residues 603–634 are Cytoplasmic-facing; the sequence is YKFIRNCCQKSDDHHGLVNTLSTASVNGDLKN. Ser627 bears the Phosphoserine mark.

This sequence belongs to the sodium:neurotransmitter symporter (SNF) (TC 2.A.22) family. SLC6A19 subfamily. Interacts in a tissue-specific manner with ACE2 in small intestine and with CLTRN in the kidney. Interacts with CLTRN; this interaction is required for trafficking of SLC6A19 to the plasma membrane and for its catalytic activation in kidneys. Interacts with ACE2; this interaction is required for trafficking of SLC6A19 to the plasma membrane and for its catalytic activation in intestine. Interacts with ANPEP; the interaction positively regulates its amino acid transporter activity. As to expression, predominantly expressed in kidney and small intestine (at protein level). Expressed in the intestinal brush border (at protein level). Expression not observed in other organs, such as lung, skeletal muscle, brain, liver and pancreas. In kidney, expression is localized in the renal cortex but not in the medulla. Substantial amounts of expression in the proximal tubules. The distal nephron segments and the glomeruli are consistently negative. In the small intestine, expression is exclusively localized in villus enterocytes. High resolution of the hybridization-positive villi reveals a gradient of expression with the highest levels in apical cells. Not detected in crypt cells or in any other cell types of the small intestine.

It is found in the cell membrane. The enzyme catalyses L-alanine(in) + Na(+)(in) = L-alanine(out) + Na(+)(out). The catalysed reaction is L-cysteine(in) + Na(+)(in) = L-cysteine(out) + Na(+)(out). It carries out the reaction L-glutamine(in) + Na(+)(in) = L-glutamine(out) + Na(+)(out). It catalyses the reaction glycine(in) + Na(+)(in) = glycine(out) + Na(+)(out). The enzyme catalyses L-isoleucine(in) + Na(+)(in) = L-isoleucine(out) + Na(+)(out). The catalysed reaction is L-leucine(in) + Na(+)(in) = L-leucine(out) + Na(+)(out). It carries out the reaction L-methionine(in) + Na(+)(in) = L-methionine(out) + Na(+)(out). It catalyses the reaction L-phenylalanine(in) + Na(+)(in) = L-phenylalanine(out) + Na(+)(out). The enzyme catalyses L-serine(in) + Na(+)(in) = L-serine(out) + Na(+)(out). The catalysed reaction is L-tryptophan(in) + Na(+)(in) = L-tryptophan(out) + Na(+)(out). It carries out the reaction L-tyrosine(in) + Na(+)(in) = L-tyrosine(out) + Na(+)(out). It catalyses the reaction L-valine(in) + Na(+)(in) = L-valine(out) + Na(+)(out). Transporter that mediates resorption of neutral amino acids across the apical membrane of renal and intestinal epithelial cells. This uptake is sodium-dependent and chloride-independent. Requires CLTRN in kidney or ACE2 in intestine for cell surface expression and amino acid transporter activity. The sequence is that of Sodium-dependent neutral amino acid transporter B(0)AT1 (Slc6a19) from Mus musculus (Mouse).